A 471-amino-acid polypeptide reads, in one-letter code: Actin-related protein 8 (471 aa).

The region spanning 40–86 (LGAFDQLPMDILVQILMMMEPKDAVKLGLTCKAWKCVASGNRLWIFY) is the F-box domain. 256–259 (NIGF) serves as a coordination point for ATP.

This sequence belongs to the actin family. Plant ARP8 subfamily. As to expression, ubiquitously expressed in all organs and cell types. Higher expression in seedlings.

It is found in the nucleus. The protein localises to the nucleolus. Its subcellular location is the cytoplasm. This is Actin-related protein 8 (ARP8) from Arabidopsis thaliana (Mouse-ear cress).